Consider the following 904-residue polypeptide: MKGNQEEYRLKFFLDHDYLRRECKVCKTPFWSKDKTREDCADIPCSDYYFLDMKESNLNWSVSEARRRFLDFFRRNGHEIIPPKPVLARWREDLYLTIASIVDFQPYITSGISPPPANPLVVSQPCIRMDDVDNVGITFGRHLTTFEMGGHHAFNYPDKFLYWKDETVAYAKEFFTKEMGIPEELLNFKESWWEGGGNAGPSFEVTVGGLELATLVFMQYEIRDGEYVPLKLKIVDTGYGIERLAWFTQKTPTAFHAIYGELVDKFLEKLGLPSLNPDMLKVASRFAGRIDPDVPSTIQGHREQVAKAMGLPVKEVSEELTRAARVFQVLDHTKTIALMLGDGLVPSSGGEGYLGRLLIRRALRTLKLLNVDVRLSELVDMQIGFWGKDFTQLVRNRDYILDAVNLEQEKFNEILNRMSSVVSSLTKKKEIGVEDLIQLYDSQGIPPDLMAEEMRSKGLKVEVPHNFYSIVAKRHQSAPVKKEWDTTKLPPEVVKQVKDLPPTEKLYYKDQYARNFEGVIVKSLGKYLVLDRTVFYPEGGGQLGDQGWLLLDGQRVKVVDTQKVGDVVVHVLEREISAKEGDKVKGEIDWVRRFRMMRHHTGTHVVLAAAKKLLGDHVWQAGAEKTPEKARLDITHHRNLTREEVKRIEEMANLVVDDRRPVTPFEINRTEAETKYGVSIYEGGVPNKAVIRLLEIKDWDVESCGGTHVANTADIGGIKIVNVEKIQDGIIRLEYVAGDVISSYAGNLEDKLEGLASKLETSTSQIESRVEKLKEENERMKELIAFYRRQYLDDLEKHVETRNVGKVKIVILPSLKDEDLEREAMRRLTSTQGVVVIHVNQVNGKLQIEIGTSKDLNVSTVVTELVKAGGKGGGRGTFGSVMIEKGTKEEVIDIVERAIKGGNS.

4 residues coordinate Zn(2+): His600, His604, Cys704, and His708.

Belongs to the class-II aminoacyl-tRNA synthetase family. Zn(2+) serves as cofactor.

It localises to the cytoplasm. The enzyme catalyses tRNA(Ala) + L-alanine + ATP = L-alanyl-tRNA(Ala) + AMP + diphosphate. In terms of biological role, catalyzes the attachment of alanine to tRNA(Ala) in a two-step reaction: alanine is first activated by ATP to form Ala-AMP and then transferred to the acceptor end of tRNA(Ala). Also edits incorrectly charged Ser-tRNA(Ala) and Gly-tRNA(Ala) via its editing domain. This chain is Alanine--tRNA ligase, found in Metallosphaera sedula (strain ATCC 51363 / DSM 5348 / JCM 9185 / NBRC 15509 / TH2).